The following is a 931-amino-acid chain: Dymeclin (931 aa).

3 disordered regions span residues 1–53, 599–618, and 839–931; these read MGVA…SSTT, SPSK…NTNN, and DANN…EKTN. A lipid anchor (N-myristoyl glycine) is attached at Gly2. Low complexity-rich tracts occupy residues 27–49 and 601–618; these read NNNK…NNNN and SKIN…NTNN. The segment covering 839–858 has biased composition (polar residues); it reads DANNFTPKKQLSSDQLHSPP. Low complexity-rich tracts occupy residues 859 to 876 and 889 to 901; these read TNTT…SSNT and QLQQ…NQEQ. A compositionally biased stretch (polar residues) spans 919-931; sequence TTGVELSSTEKTN.

It belongs to the dymeclin family.

The chain is Dymeclin (dym) from Dictyostelium discoideum (Social amoeba).